The primary structure comprises 635 residues: 1-deoxy-D-xylulose-5-phosphate synthase (635 aa).

Thiamine diphosphate contacts are provided by residues His-77 and 118–120 (GHA). Asp-150 contributes to the Mg(2+) binding site. Thiamine diphosphate contacts are provided by residues 151–152 (AS), Asn-179, Tyr-290, and Glu-372. Asn-179 contacts Mg(2+).

The protein belongs to the transketolase family. DXPS subfamily. In terms of assembly, homodimer. Mg(2+) is required as a cofactor. It depends on thiamine diphosphate as a cofactor.

The catalysed reaction is D-glyceraldehyde 3-phosphate + pyruvate + H(+) = 1-deoxy-D-xylulose 5-phosphate + CO2. The protein operates within metabolic intermediate biosynthesis; 1-deoxy-D-xylulose 5-phosphate biosynthesis; 1-deoxy-D-xylulose 5-phosphate from D-glyceraldehyde 3-phosphate and pyruvate: step 1/1. Functionally, catalyzes the acyloin condensation reaction between C atoms 2 and 3 of pyruvate and glyceraldehyde 3-phosphate to yield 1-deoxy-D-xylulose-5-phosphate (DXP). This Leptospira borgpetersenii serovar Hardjo-bovis (strain JB197) protein is 1-deoxy-D-xylulose-5-phosphate synthase.